The chain runs to 243 residues: MVKVKLINYTPKPLETVTWAALISYWDGWSTEAFEKISPNDVEIHLPRILSYGHESILEHATFTFSIEGCSRVCTHQLVRHRIASYTQQSQRYIKINPEDVEETFVIPESIKKDSELLKEWKELLKRSLELYEKSIERGIHQEDARFILPQSVKTKIVVTMNLRELKHFFGLRLCERAQWEIREVAWKMLEEIAKRKELKPIIEWAKLGPRCIQLGYCPERELMPPGCLKRTRERWKNLLEKY.

Positions 2–207 (VKVKLINYTP…ELKPIIEWAK (206 aa)) constitute a ThyX domain. Residues Ser56, 80–82 (RHR), and Gln88 each bind FAD. DUMP contacts are provided by residues 77-80 (QLVR), 88-92 (QQSQR), and Arg146. The ThyX motif motif lies at 80 to 90 (RHRIASYTQQS). Residues 162–164 (NLR) and His168 contribute to the FAD site. Arg173 provides a ligand contact to dUMP. The active-site Involved in ionization of N3 of dUMP, leading to its activation is the Arg173.

The protein belongs to the thymidylate synthase ThyX family. As to quaternary structure, homotetramer. It depends on FAD as a cofactor.

The catalysed reaction is dUMP + (6R)-5,10-methylene-5,6,7,8-tetrahydrofolate + NADPH + H(+) = dTMP + (6S)-5,6,7,8-tetrahydrofolate + NADP(+). The protein operates within pyrimidine metabolism; dTTP biosynthesis. Its function is as follows. Catalyzes the reductive methylation of 2'-deoxyuridine-5'-monophosphate (dUMP) to 2'-deoxythymidine-5'-monophosphate (dTMP) while utilizing 5,10-methylenetetrahydrofolate (mTHF) as the methyl donor, and NADPH and FADH(2) as the reductant. In Pyrococcus horikoshii (strain ATCC 700860 / DSM 12428 / JCM 9974 / NBRC 100139 / OT-3), this protein is Flavin-dependent thymidylate synthase.